The chain runs to 432 residues: Glutamyl-tRNA reductase (432 aa).

Substrate-binding positions include 55-58 (TCNR), serine 114, 119-121 (ETQ), and glutamine 125. Cysteine 56 (nucleophile) is an active-site residue. 194 to 199 (GAGEMI) is a binding site for NADP(+).

The protein belongs to the glutamyl-tRNA reductase family. As to quaternary structure, homodimer.

The catalysed reaction is (S)-4-amino-5-oxopentanoate + tRNA(Glu) + NADP(+) = L-glutamyl-tRNA(Glu) + NADPH + H(+). Its pathway is porphyrin-containing compound metabolism; protoporphyrin-IX biosynthesis; 5-aminolevulinate from L-glutamyl-tRNA(Glu): step 1/2. Its function is as follows. Catalyzes the NADPH-dependent reduction of glutamyl-tRNA(Glu) to glutamate 1-semialdehyde (GSA). The chain is Glutamyl-tRNA reductase from Burkholderia orbicola (strain MC0-3).